The chain runs to 717 residues: Homeobox protein araucan (717 aa).

7 disordered regions span residues 46-80, 94-130, 317-371, 395-418, 478-516, 549-615, and 675-717; these read APAM…PNAL, GGSS…GGGG, NKMT…AIDE, SGGY…YHHQ, TPPP…AGRD, TNNS…ASQR, and ARLG…KFTN. Positions 94 to 103 are enriched in gly residues; it reads GGSSAGGGGP. The segment at residues 255–317 is a DNA-binding region (homeobox; TALE-type); the sequence is LAARRKNATR…NARRRLKKEN (63 aa). The span at 317–327 shows a compositional bias: basic and acidic residues; it reads NKMTWEPKNRT. S336 is modified (phosphoserine). Residues 337–347 are compositionally biased toward basic and acidic residues; that stretch reads DDEKDKEDLEP. The segment covering 395-410 has biased composition (gly residues); the sequence is SGGYPGGGGSSSGHPG. Composition is skewed to low complexity over residues 492–507, 559–589, 599–614, and 687–698; these read QQQQ…AQHQ, PPQQ…GPII, QQQQ…TASQ, and SSGNSSSSSSSS.

Belongs to the TALE/IRO homeobox family.

The protein resides in the nucleus. Functionally, controls proneural and vein forming genes. Positive transcriptional controller of AC-SC (achaete-scute). May act as an activator that interacts with the transcriptional complex assembled on the AC and SC promoters and participates in transcription initiation. The chain is Homeobox protein araucan (ara) from Drosophila melanogaster (Fruit fly).